A 346-amino-acid polypeptide reads, in one-letter code: DNA primase small subunit PriS (346 aa).

Residues aspartate 97, aspartate 99, and aspartate 280 contribute to the active site.

Belongs to the eukaryotic-type primase small subunit family. Heterodimer of a small subunit (PriS) and a large subunit (PriL). Mg(2+) serves as cofactor. Mn(2+) is required as a cofactor.

Catalytic subunit of DNA primase, an RNA polymerase that catalyzes the synthesis of short RNA molecules used as primers for DNA polymerase during DNA replication. The small subunit contains the primase catalytic core and has DNA synthesis activity on its own. Binding to the large subunit stabilizes and modulates the activity, increasing the rate of DNA synthesis while decreasing the length of the DNA fragments, and conferring RNA synthesis capability. The DNA polymerase activity may enable DNA primase to also catalyze primer extension after primer synthesis. May also play a role in DNA repair. This Thermococcus kodakarensis (strain ATCC BAA-918 / JCM 12380 / KOD1) (Pyrococcus kodakaraensis (strain KOD1)) protein is DNA primase small subunit PriS.